A 258-amino-acid polypeptide reads, in one-letter code: UPF0246 protein Asuc_0575 (258 aa).

The protein belongs to the UPF0246 family.

The polypeptide is UPF0246 protein Asuc_0575 (Actinobacillus succinogenes (strain ATCC 55618 / DSM 22257 / CCUG 43843 / 130Z)).